Here is a 128-residue protein sequence, read N- to C-terminus: Large ribosomal subunit protein uL22 (128 aa).

It belongs to the universal ribosomal protein uL22 family. Part of the 50S ribosomal subunit.

This protein binds specifically to 23S rRNA; its binding is stimulated by other ribosomal proteins, e.g. L4, L17, and L20. It is important during the early stages of 50S assembly. It makes multiple contacts with different domains of the 23S rRNA in the assembled 50S subunit and ribosome. In terms of biological role, the globular domain of the protein is located near the polypeptide exit tunnel on the outside of the subunit, while an extended beta-hairpin is found that lines the wall of the exit tunnel in the center of the 70S ribosome. The polypeptide is Large ribosomal subunit protein uL22 (Prochlorococcus marinus (strain AS9601)).